Consider the following 122-residue polypeptide: uncharacterized protein (122 aa).

This is an uncharacterized protein from Homo sapiens (Human).